The chain runs to 39 residues: Photosystem II reaction center protein L (39 aa).

Residues 18–38 (SLYLGLLLVFVTAVLFTSYFF) form a helical membrane-spanning segment.

Belongs to the PsbL family. As to quaternary structure, PSII is composed of 1 copy each of membrane proteins PsbA, PsbB, PsbC, PsbD, PsbE, PsbF, PsbH, PsbI, PsbJ, PsbK, PsbL, PsbM, PsbT, PsbX, PsbY, Psb30/Ycf12, peripheral proteins PsbO, CyanoQ (PsbQ), PsbU, PsbV and a large number of cofactors. It forms dimeric complexes.

The protein resides in the cellular thylakoid membrane. Its function is as follows. One of the components of the core complex of photosystem II (PSII). PSII is a light-driven water:plastoquinone oxidoreductase that uses light energy to abstract electrons from H(2)O, generating O(2) and a proton gradient subsequently used for ATP formation. It consists of a core antenna complex that captures photons, and an electron transfer chain that converts photonic excitation into a charge separation. This subunit is found at the monomer-monomer interface and is required for correct PSII assembly and/or dimerization. The polypeptide is Photosystem II reaction center protein L (Prochlorococcus marinus (strain MIT 9313)).